We begin with the raw amino-acid sequence, 845 residues long: MLKFIKNIFKDSNTRELEKLQHIVDEINSLEPYMKKLSDEQLRDKTREFKERIVKGETLDELLPEAFAVVREAAQRSTSEKFRHYDVQLMGGIVLHQGKIAEMKTGEGKTLAATLPVYLNALTGKGVHVVTVNDYLAKRDSEWMGQIYRFLGLSVGVILNGMTPRERKKAYQADVTYGSNNEFGFDYLRDNLAYNPDDVVQGELHYAILDEVDSILIDEARTPLIISGPAQETTKDYRKFNRIIPRLVKGRDYEVDEKNRTVHLTEEGLARVEKKLNISNLYDDQNFQLAHQLNQALKAHTLMKKDRDYIVKDGEVKIVDEFTGRIMEGRRFSEGLHQAIEAKEGVAVNKESQTFASITYQNFFRMYDKLAGMTGTAATEEEEFIKIYGMEVVQIPTNKPMIREDLPDVVFRTEEAKFKAVAEEVALKYKKGQPVLVGTVDIEKSEKLSRMLKRKGIPHQVLNAKNHEKEAEIIKKAGQKNSVTISTNMAGRGTDIVLGEGVKELGGLHVIGTERHESRRIDNQLRGRSGRQGDPGSSQFFVSLEDDLLRLFGSDNISMLMDRMGFDDDQPIEHKMITRSLERAQKKVEGRNFEIRKTILEYDNIMNKQREIIYEQRKKILFASDLKEYIMGMIEMLVDDIMDTYLSSEVHPDDWDIDGLIKYLSEFNLVNINEEDFKDKDREKIREELIKIATKTYEEKEAEIGKESMQKLIKNLALRIIDRNWMNHLDNMDELRQGIGLRAYGQRDPLTEYKFESYDMFNGMTGTIREEIIKNLFRIEVKEREINLDPIMLKRLKYRRNFLSNRANRPQKKAKRQPIVKPDKPGRNDPCPCGSGKKYKHCCGR.

ATP is bound by residues Gln-88, 106–110, and Asp-495; that span reads GEGKT. Residues 804–838 form a disordered region; it reads SNRANRPQKKAKRQPIVKPDKPGRNDPCPCGSGKK. The span at 809-818 shows a compositional bias: basic residues; it reads RPQKKAKRQP. Residues Cys-831, Cys-833, Cys-842, and Cys-843 each coordinate Zn(2+).

Belongs to the SecA family. As to quaternary structure, monomer and homodimer. Part of the essential Sec protein translocation apparatus which comprises SecA, SecYEG and auxiliary proteins SecDF. Other proteins may also be involved. Zn(2+) serves as cofactor.

The protein localises to the cell inner membrane. Its subcellular location is the cytoplasm. It carries out the reaction ATP + H2O + cellular proteinSide 1 = ADP + phosphate + cellular proteinSide 2.. Functionally, part of the Sec protein translocase complex. Interacts with the SecYEG preprotein conducting channel. Has a central role in coupling the hydrolysis of ATP to the transfer of proteins into and across the cell membrane, serving as an ATP-driven molecular motor driving the stepwise translocation of polypeptide chains across the membrane. The chain is Protein translocase subunit SecA from Halothermothrix orenii (strain H 168 / OCM 544 / DSM 9562).